A 91-amino-acid polypeptide reads, in one-letter code: Defensin-like protein 95 (91 aa).

An N-terminal signal peptide occupies residues 1-27; sequence MGSLKLSTFAIVVCLSILLISPIEVNG. 4 disulfide bridges follow: Cys-31–Cys-76, Cys-38–Cys-63, Cys-47–Cys-73, and Cys-51–Cys-75.

It belongs to the DEFL family.

It is found in the secreted. In Arabidopsis thaliana (Mouse-ear cress), this protein is Defensin-like protein 95.